Consider the following 313-residue polypeptide: Porphobilinogen deaminase (313 aa).

Cys-242 is modified (S-(dipyrrolylmethanemethyl)cysteine).

The protein belongs to the HMBS family. Monomer. It depends on dipyrromethane as a cofactor.

The enzyme catalyses 4 porphobilinogen + H2O = hydroxymethylbilane + 4 NH4(+). The protein operates within porphyrin-containing compound metabolism; protoporphyrin-IX biosynthesis; coproporphyrinogen-III from 5-aminolevulinate: step 2/4. Tetrapolymerization of the monopyrrole PBG into the hydroxymethylbilane pre-uroporphyrinogen in several discrete steps. This chain is Porphobilinogen deaminase, found in Yersinia pseudotuberculosis serotype IB (strain PB1/+).